Consider the following 66-residue polypeptide: Probable Sec-independent protein translocase protein TatE (66 aa).

The helical transmembrane segment at 1 to 21 threads the bilayer; the sequence is MEGISITKLLVIAVLIVLLFG. The tract at residues 46–66 is disordered; sequence ETPAAKKSDGAEAAPRVENKE.

The protein belongs to the TatA/E family. TatE subfamily.

Its subcellular location is the cell inner membrane. Part of the twin-arginine translocation (Tat) system that transports large folded proteins containing a characteristic twin-arginine motif in their signal peptide across membranes. TatE shares overlapping functions with TatA. In Edwardsiella piscicida, this protein is Probable Sec-independent protein translocase protein TatE.